The chain runs to 225 residues: Membrane protein (225 aa).

The Virion surface segment spans residues 1 to 20; it reads MSNETNCTLDFEQSVELFKE. The chain crosses the membrane as a helical span at residues 21-41; that stretch reads YNLFITAFLLFLTIILQYGYA. Topologically, residues 42-51 are intravirion; sequence TRIRFIYILK. Residues 52–72 traverse the membrane as a helical segment; sequence MIVLWCFWPLNIAVGVISCIY. Topologically, residues 73-77 are virion surface; it reads PPNTG. Residues 78–98 form a helical membrane-spanning segment; sequence GLVAAIILTVFACLSFVGYWI. The Intravirion segment spans residues 99–225; it reads QSCRLFKRCR…VATGGSSLYT (127 aa).

This sequence belongs to the gammacoronaviruses M protein family. As to quaternary structure, homomultimer. Interacts with envelope E protein in the budding compartment of the host cell, which is located between endoplasmic reticulum and the Golgi complex. Forms a complex with HE and S proteins. Interacts with nucleocapsid N protein. This interaction probably participates in RNA packaging into the virus.

It is found in the virion membrane. The protein resides in the host Golgi apparatus membrane. Functionally, component of the viral envelope that plays a central role in virus morphogenesis and assembly via its interactions with other viral proteins. In Avian infectious bronchitis virus (strain KB8523) (IBV), this protein is Membrane protein.